The chain runs to 63 residues: Large ribosomal subunit protein uL29 (63 aa).

The protein belongs to the universal ribosomal protein uL29 family.

The sequence is that of Large ribosomal subunit protein uL29 from Listeria innocua serovar 6a (strain ATCC BAA-680 / CLIP 11262).